The sequence spans 861 residues: ATP-dependent helicase rhp16 (861 aa).

Residues 1-13 (MGTSCNKINSNSN) are compositionally biased toward polar residues. Positions 1–217 (MGTSCNKINS…KSIPSHERTH (217 aa)) are disordered. Basic and acidic residues-rich tracts occupy residues 14-23 (KGKENMHFVL) and 38-57 (VERDDKLDMETTRWNGKEFE). Residues 60-82 (LSTNKKLIIQSNNTSSQHSTPPL) are compositionally biased toward polar residues. Low complexity predominate over residues 83 to 95 (SISDTSTHTGSST). Polar residues predominate over residues 96–106 (DNVEANPNTGF). The segment covering 109 to 123 (ARKRSLRSSNLKKKF) has biased composition (basic residues). The span at 131 to 145 (ESNESEFIDDDESDE) shows a compositional bias: acidic residues. The segment covering 193–204 (ARASSSASSSSR) has biased composition (low complexity). Residues 268-442 (RQEDSSFGGG…FSLLRFLRAD (175 aa)) form the Helicase ATP-binding domain. 281–288 (DEMGMGKT) provides a ligand contact to ATP. Residues 393-396 (DEAH) carry the DEAH box motif. Residues 609 to 652 (CKICDEVAQDAIESRCHHTFCRLCVTEYINAAGDGENVNCPSCF) form an RING-type zinc finger. The Helicase C-terminal domain occupies 695–848 (LVEELYLLRK…TIDQDEKALN (154 aa)).

The protein belongs to the SNF2/RAD54 helicase family.

It is found in the nucleus. Involved in global genome repair (GGR) via nucleotide excision repair (NER), in conjunction with rhp7, after UV irradiation. This Schizosaccharomyces pombe (strain 972 / ATCC 24843) (Fission yeast) protein is ATP-dependent helicase rhp16 (rhp16).